We begin with the raw amino-acid sequence, 454 residues long: Aminodeoxychorismate synthase component 1 (454 aa).

Residues S37, 44–47, and 241–243 each bind L-tryptophan; these read YNRF and PFS. The active-site Proton donor is E259. The N6-(4-deoxychorismate)-lysine intermediate role is filled by K275.

Belongs to the anthranilate synthase component I family. As to quaternary structure, monomer. Heterodimer consisting of two non-identical subunits: a glutamine amidotransferase subunit (PabA) and a aminodeoxychorismate synthase subunit (PabB). The cofactor is Mg(2+).

It catalyses the reaction chorismate + L-glutamine = 4-amino-4-deoxychorismate + L-glutamate. It participates in cofactor biosynthesis; tetrahydrofolate biosynthesis; 4-aminobenzoate from chorismate: step 1/2. Its function is as follows. Part of a heterodimeric complex that catalyzes the two-step biosynthesis of 4-amino-4-deoxychorismate (ADC), a precursor of p-aminobenzoate (PABA) and tetrahydrofolate. In the first step, a glutamine amidotransferase (PabA) generates ammonia as a substrate that, along with chorismate, is used in the second step, catalyzed by aminodeoxychorismate synthase (PabB) to produce ADC. This Salmonella typhimurium (strain LT2 / SGSC1412 / ATCC 700720) protein is Aminodeoxychorismate synthase component 1 (pabB).